Here is a 333-residue protein sequence, read N- to C-terminus: tRNA pseudouridine synthase B (333 aa).

The Nucleophile role is filled by aspartate 46.

The protein belongs to the pseudouridine synthase TruB family. Type 1 subfamily.

It catalyses the reaction uridine(55) in tRNA = pseudouridine(55) in tRNA. In terms of biological role, responsible for synthesis of pseudouridine from uracil-55 in the psi GC loop of transfer RNAs. This is tRNA pseudouridine synthase B from Gluconobacter oxydans (strain 621H) (Gluconobacter suboxydans).